A 130-amino-acid polypeptide reads, in one-letter code: Chemotaxis protein CheY-3 (130 aa).

Residues 10 to 127 (KILIVDDFST…TLKEKLDKIF (118 aa)) form the Response regulatory domain. 4 residues coordinate Mg(2+): Asp15, Asp16, Asp60, and Asn62. Asp60 carries the post-translational modification 4-aspartylphosphate.

Interacts with FliM. Requires Mg(2+) as cofactor.

It localises to the cytoplasm. Acts as a response regulator to control chemotaxis. Involved in the transmission of sensory signals from the chemoreceptors to the flagellar motors. Switches the flagellar rotation by binding to the flagellar motor switch protein FliM. In its active (phosphorylated or acetylated) form, exhibits enhanced binding to a switch component, FliM, at the flagellar motor which induces a change from counterclockwise to clockwise flagellar rotation. The chain is Chemotaxis protein CheY-3 from Vibrio cholerae serotype O1 (strain ATCC 39315 / El Tor Inaba N16961).